Reading from the N-terminus, the 136-residue chain is SPbeta prophage-derived uncharacterized protein YonI (136 aa).

In Bacillus subtilis (strain 168), this protein is SPbeta prophage-derived uncharacterized protein YonI (yonI).